A 332-amino-acid polypeptide reads, in one-letter code: Protein FAM9A (332 aa).

Residues 1-13 (MEPVGRKRSRKAA) show a composition bias toward basic residues. Disordered regions lie at residues 1–114 (MEPV…EHTG) and 186–293 (QKDD…PTGV). Basic and acidic residues-rich tracts occupy residues 74-91 (GKDP…FTET) and 98-114 (DEHG…EHTG). Low complexity predominate over residues 196–217 (AAAAAAEAAAAAEAAAAAAEVI). Over residues 218–275 (VVEDEEEEEKEEEEEKEEEEEEGEEEGGGEEGEEGGGGGEGEETEEEEEEEEEEEEEE) the composition is skewed to acidic residues. Basic and acidic residues predominate over residues 276–285 (QIKAFQEKQK).

This sequence belongs to the XLR/SYCP3 family. In terms of tissue distribution, expressed exclusively in testis.

Its subcellular location is the nucleus. The protein resides in the nucleolus. The chain is Protein FAM9A from Homo sapiens (Human).